We begin with the raw amino-acid sequence, 153 residues long: Endoribonuclease YbeY (153 aa).

Residues His-113, His-117, and His-123 each coordinate Zn(2+).

The protein belongs to the endoribonuclease YbeY family. The cofactor is Zn(2+).

Its subcellular location is the cytoplasm. Its function is as follows. Single strand-specific metallo-endoribonuclease involved in late-stage 70S ribosome quality control and in maturation of the 3' terminus of the 16S rRNA. In Aliivibrio salmonicida (strain LFI1238) (Vibrio salmonicida (strain LFI1238)), this protein is Endoribonuclease YbeY.